The chain runs to 258 residues: MAASVLNVLLRRLPYFSPFRGAYGVQVPLQTLCTKAPPEDDSLPPIPVSPYEDEPWKYLDSEEYHNRNGSRPVWADYRRNHKGGIPPQRTRKMCIRGNKVAGNPCPICRDQKLHVDFRNVKLLKQFVCAHTGIIFHAPYTGVCMKQHKKLTQAIQKARDHGLLSYHIPQVEPRDLDFSTSHGAVSATPPAPTLVSGDPWYPWYSWKQPPERELSRLRRLYQGHLREESGPPPESMPKVPLTAPNEATSTEQAGPQSAL.

The transit peptide at 1–35 directs the protein to the mitochondrion; it reads MAASVLNVLLRRLPYFSPFRGAYGVQVPLQTLCTK. S49 bears the Phosphoserine mark. The interval 221–258 is disordered; sequence QGHLREESGPPPESMPKVPLTAPNEATSTEQAGPQSAL. A compositionally biased stretch (polar residues) spans 244–258; that stretch reads NEATSTEQAGPQSAL.

The protein belongs to the bacterial ribosomal protein bS18 family. Mitochondrion-specific ribosomal protein mS40 subfamily. In terms of assembly, component of the mitochondrial ribosome small subunit (28S) which comprises a 12S rRNA and about 30 distinct proteins.

Its subcellular location is the mitochondrion. The sequence is that of Small ribosomal subunit protein mS40 from Bos taurus (Bovine).